Reading from the N-terminus, the 1585-residue chain is MENTGWMGKGHRMTPACPLLLSVILSLRLATAFDPAPSACSALASGVLYGAFSLQDLFPTIASGCSWTLENPDPTKYSLYLRFNRQEQVCAHFAPRLLPLDHYLVNFTCLRPSPEEAVAQAESEVGRPEEEEAEAAAGLELCSGSGPFTFLHFDKNFVQLCLSAEPSEAPRLLAPAALAFRFVEVLLINNNNSSQFTCGVLCRWSEECGRAAGRACGFAQPGCSCPGEAGAGSTTTTSPGPPAAHTLSNALVPGGPAPPAEADLHSGSSNDLFTTEMRYGEEPEEEPKVKTQWPRSADEPGLYMAQTGDPAAEEWSPWSVCSLTCGQGLQVRTRSCVSSPYGTLCSGPLRETRPCNNSATCPVHGVWEEWGSWSLCSRSCGRGSRSRMRTCVPPQHGGKACEGPELQTKLCSMAACPVEGQWLEWGPWGPCSTSCANGTQQRSRKCSVAGPAWATCTGALTDTRECSNLECPATDSKWGPWNAWSLCSKTCDTGWQRRFRMCQATGTQGYPCEGTGEEVKPCSEKRCPAFHEMCRDEYVMLMTWKKAAAGEIIYNKCPPNASGSASRRCLLSAQGVAYWGLPSFARCISHEYRYLYLSLREHLAKGQRMLAGEGMSQVVRSLQELLARRTYYSGDLLFSVDILRNVTDTFKRATYVPSADDVQRFFQVVSFMVDAENKEKWDDAQQVSPGSVHLLRVVEDFIHLVGDALKAFQSSLIVTDNLVISIQREPVSAVSSDITFPMRGRRGMKDWVRHSEDRLFLPKEVLSLSSPGKPATSGAAGSPGRGRGPGTVPPGPGHSHQRLLPADPDESSYFVIGAVLYRTLGLILPPPRPPLAVTSRVMTVTVRPPTQPPAEPLITVELSYIINGTTDPHCASWDYSRADASSGDWDTENCQTLETQAAHTRCQCQHLSTFAVLAQPPKDLTLELAGSPSVPLVIGCAVSCMALLTLLAIYAAFWRFIKSERSIILLNFCLSILASNILILVGQSRVLSKGVCTMTAAFLHFFFLSSFCWVLTEAWQSYLAVIGRMRTRLVRKRFLCLGWGLPALVVAVSVGFTRTKGYGTSSYCWLSLEGGLLYAFVGPAAVIVLVNMLIGIIVFNKLMARDGISDKSKKQRAGSERCPWASLLLPCSACGAVPSPLLSSASARNAMASLWSSCVVLPLLALTWMSAVLAMTDRRSVLFQALFAVFNSAQGFVITAVHCFLRREVQDVVKCQMGVCRADESEDSPDSCKNGQLQILSDFEKDVDLACQTVLFKEVNTCNPSTITGTLSRLSLDEDEEPKSCLVGPEGSLSFSPLPGNILVPMAASPGLGEPPPPQEANPVYMCGEGGLRQLDLTWLRPTEPGSEGDYMVLPRRTLSLQPGGGGGGGEDAPRARPEGTPRRAAKTVAHTEGYPSFLSVDHSGLGLGPAYGSLQNPYGMTFQPPPPTPSARQVPEPGERSRTMPRTVPGSTMKMGSLERKKLRYSDLDFEKVMHTRKRHSELYHELNQKFHTFDRYRSQSTAKREKRWSVSSGGAAERSVCTDKPSPGERPSLSQHRRHQSWSTFKSMTLGSLPPKPRERLTLHRAAAWEPTEPPDGDFQTEV.

Residues 1–32 (MENTGWMGKGHRMTPACPLLLSVILSLRLATA) form the signal peptide. Topologically, residues 33–936 (FDPAPSACSA…ELAGSPSVPL (904 aa)) are extracellular. N-linked (GlcNAc...) asparagine glycans are attached at residues Asn-106, Asn-191, and Asn-192. Residues 229-238 (AGAGSTTTTS) are compositionally biased toward low complexity. A disordered region spans residues 229–271 (AGAGSTTTTSPGPPAAHTLSNALVPGGPAPPAEADLHSGSSND). Ser-266 carries O-linked (Xyl...) (chondroitin sulfate) serine glycosylation. TSP type-1 domains lie at 309–362 (DPAA…ATCP), 364–417 (HGVW…AACP), 419–472 (EGQW…LECP), and 475–528 (DSKW…KRCP). 14 disulfide bridges follow: Cys-321–Cys-355, Cys-325–Cys-361, Cys-336–Cys-345, Cys-376–Cys-411, Cys-380–Cys-416, Cys-391–Cys-401, Cys-431–Cys-466, Cys-435–Cys-471, Cys-446–Cys-456, Cys-487–Cys-522, Cys-491–Cys-527, Cys-502–Cys-512, Cys-534–Cys-569, and Cys-557–Cys-587. N-linked (GlcNAc...) asparagine glycosylation is present at Asn-356. An N-linked (GlcNAc...) asparagine glycan is attached at Asn-437. 2 N-linked (GlcNAc...) asparagine glycosylation sites follow: Asn-560 and Asn-645. Positions 757–924 (DRLFLPKEVL…AVLAQPPKDL (168 aa)) constitute a GAIN-B domain. Residues 767-806 (SLSSPGKPATSGAAGSPGRGRGPGTVPPGPGHSHQRLLPA) form a disordered region. Residues 769–780 (SSPGKPATSGAA) are compositionally biased toward low complexity. A glycan (N-linked (GlcNAc...) asparagine) is linked at Asn-867. Cystine bridges form between Cys-874–Cys-906 and Cys-894–Cys-908. A GPS region spans residues 874-924 (CASWDYSRADASSGDWDTENCQTLETQAAHTRCQCQHLSTFAVLAQPPKDL). A helical membrane pass occupies residues 937-957 (VIGCAVSCMALLTLLAIYAAF). Topologically, residues 958-965 (WRFIKSER) are cytoplasmic. Residues 966-986 (SIILLNFCLSILASNILILVG) form a helical membrane-spanning segment. Residues 987 to 994 (QSRVLSKG) are Extracellular-facing. The helical transmembrane segment at 995-1015 (VCTMTAAFLHFFFLSSFCWVL) threads the bilayer. The Cytoplasmic segment spans residues 1016 to 1036 (TEAWQSYLAVIGRMRTRLVRK). Residues 1037–1057 (RFLCLGWGLPALVVAVSVGFT) form a helical membrane-spanning segment. The Extracellular segment spans residues 1058 to 1078 (RTKGYGTSSYCWLSLEGGLLY). The chain crosses the membrane as a helical span at residues 1079–1099 (AFVGPAAVIVLVNMLIGIIVF). Residues 1100-1121 (NKLMARDGISDKSKKQRAGSER) lie on the Cytoplasmic side of the membrane. A helical transmembrane segment spans residues 1122–1142 (CPWASLLLPCSACGAVPSPLL). The Extracellular portion of the chain corresponds to 1143–1153 (SSASARNAMAS). A helical membrane pass occupies residues 1154-1174 (LWSSCVVLPLLALTWMSAVLA). At 1175 to 1585 (MTDRRSVLFQ…PPDGDFQTEV (411 aa)) the chain is on the cytoplasmic side. At Tyr-1351 the chain carries Phosphotyrosine. Disordered regions lie at residues 1359–1385 (LSLQ…PRRA), 1423–1454 (FQPP…GSTM), and 1498–1585 (YRSQ…QTEV). The span at 1372–1382 (DAPRARPEGTP) shows a compositional bias: basic and acidic residues. Polar residues predominate over residues 1543-1552 (SWSTFKSMTL). The span at 1575–1585 (EPPDGDFQTEV) shows a compositional bias: acidic residues.

Belongs to the G-protein coupled receptor 2 family. Adhesion G-protein coupled receptor (ADGR) subfamily. As to quaternary structure, heterodimer of 2 chains generated by proteolytic processing; the large extracellular N-terminal fragment and the membrane-bound C-terminal fragment predominantly remain associated and non-covalently linked. Interacts with GABPB2. Interacts (via carboxy-terminus) with TAX1BP3. Interacts with GNAZ. Interacts with SH3GL2. Glycosylated. In terms of processing, autoproteolytically processed at the GPS region of the GAIN-B domain; this cleavage modulates receptor activity. Additionally, furin is involved in the cleavage at another site, in the middle of the extracellular domain, generating a soluble fragment. As to expression, detected in cerebrospinal fluid (at protein level). Strongly expressed in brain. Also detected in heart, thymus, skeletal muscle, and different cell lines.

The protein localises to the cell membrane. The protein resides in the secreted. With respect to regulation, receptor activity is regulated by proteolytic processing. The long N-terminal has a an inhibitory effect on the constitutive signaling activity. Removal of the N-terminal region induces an increase of the receptor activity. Functionally, orphan G-protein coupled receptor involved in cell adhesion and probably in cell-cell interactions. Activates NFAT-signaling pathway, a transcription factor, via the G-protein GNAZ. Involved in angiogenesis inhibition. This Homo sapiens (Human) protein is Adhesion G protein-coupled receptor B2.